A 142-amino-acid polypeptide reads, in one-letter code: NCT transcriptional regulatory complex subunit B (142 aa).

The protein belongs to the NC2 beta/DR1 family. Forms the NCT transcriptional regulatory complex with nctA and mot1.

The protein resides in the nucleus. Functionally, part of the NCT transcriptional regulatory complex that acts as a key regulator of ergosterol biosynthesis and the azole exporter cdr1B. The NCT complex binds the promoters of genes linked to azole susceptibility, and especially represses the expression of cdr1B transporter. The protein is NCT transcriptional regulatory complex subunit B of Aspergillus fumigatus (strain CBS 144.89 / FGSC A1163 / CEA10) (Neosartorya fumigata).